A 2181-amino-acid polypeptide reads, in one-letter code: MRVNTPSLLICGPMISQADAAYLPQVRSSLVHNKDLSYLREAVSELPNLWLRLVREEPSLGEIDVALFLDNLSQWVKGNSTQPTASRDSRNTQWAVLTVLVHIVEYMEYLDNFSSRDEDGCGHLDAHAALLDHLHDGGIQGLCIGLLTALALACAPSHAEIAKYGAVAVRLALCCGAYIDLNEAKSPAKTICVTTRWPGDDGDDKGDIDRKCDEQLQAILDTYPDAYKSVQTDVSTVTITTNEGDVLALLGELEKGGATSKRIDLHGRYHYGGNQAALLKLLQLSKALPMLQFPRGSRLVVPVRNNCSGSIVEDNTALHEMALRCILVENAEWLKTISSSISANTRQAQLLVLGPVNCVPRSLLLRSPQPISLSVSGKADNIYPDQSIAIIGSSCCFPGAENPRQLWEFIRTKQTHGVVDAAGSFDCSFFRKSPREAEYMDPQQRLGLHLAQEALESGGYFSPSSSATKNVGCYLGISSCDYEDNVNSHPPTAYSFTGTARAFASGRISHFFGLTGPSMVIDTACSSSGVAINTACRAIQSGECTMALAGGINLISREARTQENLAAASFLSPTGECRPFDSKANGYRRGEGGGLVLLKKLSSAVADGDVVLGVIAATAVNQSEGNKSITLPSSESQTSLYQRVLESANLKPRHISYVEAHGTGTQKGDPIECQSIRTVFGGTVRPACRQLHVGSIKSNIGHSEAASGIAALLKVLQMLHHRVIPPQANFEELNPAISPLHDDNIEISRHTKPWEERFRAALVNNYGASGTNAAMLVCQPPSIQHRLPLFPNRPCHYPILLTSHSNESLQLYCRNILRFIENQNNVVSDEEVLANTAFHLAQRQDHSLSFRLTFSVSSIEELKLKLQQQSTSQSYKDGPIQKHSAQPVVVVLAGQTGRRVRLSHEIYASSELLQRHLGRCDRALQTMGFASLFPGIFDTEPLEDLVQAHCMLFSLQYSVAMSWIDSGLKIDALVGHSLGQLTALCISGMLSLQDGLKLISGRASLIQSKWGAECGAMLSVDADAETVQNLADSLPAGYKVEIACYNSSQSHVVVGTKAAITAFEKAADLRGVSLRRLAISHGFHSEMIDCILPDYNKLVQGLVLHPPAIAIEPCSQSGHSWANATPEIIARQSREPVYFANAISRLEKRFGSCIWLEAGWGSAGVNMARRALTHGPTRSLSTHSFYPAALGEPDSVKALADTTINLWNAGIRVQFWLYHRSQTGSPAPLELPLHPFMKSEYLLPVVKHSKKAQSEKDGQPIIQEKATLVSLIGKTQNAGVQTVEYSINQNSEEYSVYVRGRTVFEHLLAPVSMYIESATRAFRLLSTHKLVSFSTSASMELKNLKLHAPFGFDLQKSLRMILRKLGEDAWEFRVESHPIHEKERGSVLQATGVITLQEVYSHLAPHRPLLRRLYDRCEELGKDVSASVVQGDFIKKIINSVARYDDRYIGVRSITSKGFETVAHVFEPEIASQFTPTTPFNPLLLDNFLLIAEIQANNLGGVTPDEIYVGNGFDAATAYTNAEDSEPSTKGHWVGLYSFDHQENDGILCDIFIFCAERKILSMTILGAKFQKIAISSLKRALKTINGVPQTSGGRTPSSSITEFISGDDASPCLPIPGADKPIFIREDDFGFMTTSGHMDEENHLIPEYDVISGSSRSTSSSPPSLESRSQAMDTEEITEGAGSALFNLLSNHLNYPKGLSPDTPLGALGLDSLVAIQLQSDIEQMFGKNSQLMDINESSTFSTLFHTIFPQQQTDQFGFVPLHDQTGKDRLESAVPLRLGYSHIKHAAPSFNDSLDRSNTLFIRQVPHAMDALKQNISSTIKAAGFHDFFSDVHPRQRSLVLAYIVHAFRELGCDIRSLEVGDELPSVQFKPKYQNVMNRLFDILGSEGVINVLNKRYLGGLASFPERSAEDMHKAIMNDYPSYHPDHKLLHTTGARLADCISGKVDPLQILFQNATSIKLLEDVYVKSPMFGTGNLLLGEFMNCLFSYNKTPDRLNHIRILEIGAGTGATTQLVVDRLLACNVDFTYTFTDVSAALVASAREKLTSRYGQHQRFDMEFETLNIEKEPPASFAQSYDLVISANCIHATRDLRKSCSNIEKLLRKDGGVLCLLELTRPLEWLDCVFGLLDGWWRFDDHRTYALAGEQDWKTILLQSGFGHVDWTDDGSREAQQLRLITAWR.

Positions 74–180 (QWVKGNSTQP…LALCCGAYID (107 aa)) are N-terminal acylcarrier protein transacylase domain (SAT). A Ketosynthase family 3 (KS3) domain is found at 347-779 (QAQLLVLGPV…GTNAAMLVCQ (433 aa)). Catalysis depends on for beta-ketoacyl synthase activity residues cysteine 525, histidine 661, and histidine 702. The segment at 891–1193 (VLAGQTGRRV…SFYPAALGEP (303 aa)) is malonyl-CoA:ACP transacylase (MAT) domain. Serine 977 acts as the For acyl/malonyl transferase activity in catalysis. The N-terminal hotdog fold stretch occupies residues 1269 to 1401 (VSLIGKTQNA…GVITLQEVYS (133 aa)). One can recognise a PKS/mFAS DH domain in the interval 1269 to 1579 (VSLIGKTQNA…FQKIAISSLK (311 aa)). Positions 1276 to 1573 (QNAGVQTVEY…TILGAKFQKI (298 aa)) are product template (PT) domain. Residues 1425–1579 (SASVVQGDFI…FQKIAISSLK (155 aa)) are C-terminal hotdog fold. The disordered stretch occupies residues 1652–1673 (ISGSSRSTSSSPPSLESRSQAM). A compositionally biased stretch (low complexity) spans 1653–1670 (SGSSRSTSSSPPSLESRS). The region spanning 1677–1753 (EITEGAGSAL…TLFHTIFPQQ (77 aa)) is the Carrier domain. O-(pantetheine 4'-phosphoryl)serine is present on serine 1713. The tract at residues 1982-2164 (EFMNCLFSYN…QSGFGHVDWT (183 aa)) is methyltransferase (CMeT) domain.

Its pathway is secondary metabolite biosynthesis; terpenoid biosynthesis. Non-reducing polyketide synthase; part of the gene cluster that mediates the biosynthesis of the immunosuppressants subglutinols, meroterpenoids consisting of an alpha-pyrone (4-hydroxy-5,6-dimethyl-2-pyrone) moiety attached to a decalin core fused to a five-membered cyclic ether carrying a prenylside chain. The first step of the pathway is the synthesis of the alpha-pyrone moiety by the polyketide synthase subA via condensation of one acetyl-CoA starter unit with 3 malonyl-CoA units and 2 methylations. The alpha-pyrone is then combined with geranylgeranyl pyrophosphate (GGPP) formed by the GGPP synthase subD through the action of the prenyltransferase subC to yield a linear alpha-pyrone diterpenoid. Subsequent steps in the subglutinol biosynthetic pathway involve the decalin core formation, which is thought to be initiated by the epoxidation of the C10-C11 olefin by the FAD-dependent oxidoreductase subE. The following cyclization cascade would be catalyzed by the terpene cyclase subB. Lastly, the FAD-dependent dehydrogenase subF probably catalyzes the five-membered cyclic ether formation to complete the formation of subglutinol A. Subsequent redox reactions appear to give rise to subglutinol C and D, however, it remains unclear which enzymes are responsible for these transformations. SubD may have secondary function in the conversion of the identified subglutinols to subglutinol analog 45, which seems to be the major product of the cluster. In Metarhizium robertsii (strain ARSEF 23 / ATCC MYA-3075) (Metarhizium anisopliae (strain ARSEF 23)), this protein is Non-reducing polyketide synthase subA.